Consider the following 603-residue polypeptide: Arginine--tRNA ligase (603 aa).

Residues 143–153 (PNIAKEMHVGH) carry the 'HIGH' region motif.

It belongs to the class-I aminoacyl-tRNA synthetase family. Monomer.

It is found in the cytoplasm. It carries out the reaction tRNA(Arg) + L-arginine + ATP = L-arginyl-tRNA(Arg) + AMP + diphosphate. This chain is Arginine--tRNA ligase, found in Prochlorococcus marinus (strain MIT 9303).